The primary structure comprises 403 residues: Histidine decarboxylase (403 aa).

Histidine 120 serves as a coordination point for substrate. Lysine 233 carries the post-translational modification N6-(pyridoxal phosphate)lysine.

Belongs to the group II decarboxylase family. Homotetramer. Pyridoxal 5'-phosphate serves as cofactor.

It catalyses the reaction L-histidine + H(+) = histamine + CO2. The polypeptide is Histidine decarboxylase (Pseudomonas entomophila (strain L48)).